The chain runs to 199 residues: Peroxiredoxin 2 (199 aa).

A Thioredoxin domain is found at 1 to 152 (MGQKAPDFTV…IIRVIKALQF (152 aa)). Cys40 acts as the Cysteine sulfenic acid (-SOH) intermediate in catalysis. Arg115 contributes to the substrate binding site.

Belongs to the peroxiredoxin family. Prx6 subfamily. Homodecamer. Pentamer of dimers that assemble into a ring structure.

The protein resides in the cytoplasm. It carries out the reaction a hydroperoxide + [thioredoxin]-dithiol = an alcohol + [thioredoxin]-disulfide + H2O. Its function is as follows. Thiol-specific peroxidase that catalyzes the reduction of hydrogen peroxide and organic hydroperoxides to water and alcohols, respectively. Plays a role in cell protection against oxidative stress by detoxifying peroxides. The polypeptide is Peroxiredoxin 2 (Thermoplasma acidophilum (strain ATCC 25905 / DSM 1728 / JCM 9062 / NBRC 15155 / AMRC-C165)).